A 241-amino-acid polypeptide reads, in one-letter code: Tetraspanin-1 (241 aa).

The next 3 helical transmembrane spans lie at 12–32 (ILFN…GIWV), 53–73 (FVNV…LGFL), and 89–109 (FFSI…VALV). Asn-154 carries N-linked (GlcNAc...) asparagine glycosylation. The helical transmembrane segment at 212–232 (AVTVGGVAVGVAALELAAMVV) threads the bilayer.

The protein belongs to the tetraspanin (TM4SF) family. Interacts with SLC19A2. Interacts with NTRK1/TRKA.

The protein resides in the cell membrane. Its subcellular location is the lysosome membrane. In terms of biological role, structural component of specialized membrane microdomains known as tetraspanin-enriched microdomains (TERMs), which act as platforms for receptor clustering and signaling. Participates thereby in diverse biological functions such as cell signal transduction, adhesion, migration and protein trafficking. Regulates neuronal differentiation in response to NGF by facilitating NGF-mediated activation of NTRK1/TRKA receptor tyrosine kinase and subsequent downstream signaling pathways. Plays a role in the inhibition of TNFalpha-induced apoptosis. Mechanistically, inhibits the NF-kappa-B signaling pathway by blocking phosphorylation of CHUK. Also promotes the stability of the thiamine transporter 1/SLC19A2 in intestinal epithelial cells leading to an increase of thiamine uptake process. The chain is Tetraspanin-1 (Tspan1) from Rattus norvegicus (Rat).